Consider the following 231-residue polypeptide: ATP-dependent dethiobiotin synthetase BioD 2 (231 aa).

13–18 (SVGKTV) is a binding site for ATP. Threonine 17 lines the Mg(2+) pocket. Lysine 38 is an active-site residue. ATP is bound by residues aspartate 55, 112 to 115 (EGTG), 172 to 173 (NR), 201 to 203 (PYL), and glutamine 208. The Mg(2+) site is built by aspartate 55 and glutamate 112.

The protein belongs to the dethiobiotin synthetase family. Homodimer. Mg(2+) serves as cofactor.

It is found in the cytoplasm. It carries out the reaction (7R,8S)-7,8-diammoniononanoate + CO2 + ATP = (4R,5S)-dethiobiotin + ADP + phosphate + 3 H(+). The protein operates within cofactor biosynthesis; biotin biosynthesis; biotin from 7,8-diaminononanoate: step 1/2. Its function is as follows. Catalyzes a mechanistically unusual reaction, the ATP-dependent insertion of CO2 between the N7 and N8 nitrogen atoms of 7,8-diaminopelargonic acid (DAPA, also called 7,8-diammoniononanoate) to form a ureido ring. The protein is ATP-dependent dethiobiotin synthetase BioD 2 of Salmonella typhimurium (strain LT2 / SGSC1412 / ATCC 700720).